The primary structure comprises 213 residues: Adenylate kinase (213 aa).

An ATP-binding site is contributed by 10-15; the sequence is GCGKGT. Positions 30 to 59 are NMP; that stretch reads STGDLMRKEISLNTTLGLKCQEYMNAGKYV. Residues T31, R36, 57–59, 83–86, and Q90 each bind AMP; these read KYV and GYPR. Residues 124–161 are LID; sequence NRLVCPLCKASFNLETRKPKQEGLCDFDNTKLVKRSDD. An ATP-binding site is contributed by R125. Positions 128 and 131 each coordinate Zn(2+). Residue 134–135 coordinates ATP; it reads SF. Zn(2+) contacts are provided by C148 and D151. AMP contacts are provided by R158 and R169. Residue N197 participates in ATP binding.

This sequence belongs to the adenylate kinase family. Monomer.

The protein resides in the cytoplasm. It carries out the reaction AMP + ATP = 2 ADP. The protein operates within purine metabolism; AMP biosynthesis via salvage pathway; AMP from ADP: step 1/1. Catalyzes the reversible transfer of the terminal phosphate group between ATP and AMP. Plays an important role in cellular energy homeostasis and in adenine nucleotide metabolism. The chain is Adenylate kinase from Mycoplasma capricolum subsp. capricolum (strain California kid / ATCC 27343 / NCTC 10154).